A 396-amino-acid polypeptide reads, in one-letter code: Phosphoglycerate kinase (396 aa).

Residues 21–23, Arg36, 59–62, Arg119, and Arg156 contribute to the substrate site; these read DFN and HLGK. ATP is bound by residues Lys206, Gly294, Glu325, and 352-355; that span reads GGDS.

It belongs to the phosphoglycerate kinase family. As to quaternary structure, monomer.

The protein localises to the cytoplasm. The catalysed reaction is (2R)-3-phosphoglycerate + ATP = (2R)-3-phospho-glyceroyl phosphate + ADP. It participates in carbohydrate degradation; glycolysis; pyruvate from D-glyceraldehyde 3-phosphate: step 2/5. The polypeptide is Phosphoglycerate kinase (Staphylococcus aureus (strain USA300)).